Here is a 494-residue protein sequence, read N- to C-terminus: NAD(P)H-quinone oxidoreductase subunit 2 B, chloroplastic (494 aa).

The next 13 helical transmembrane spans lie at 6–26 (LLLFHGGSIFPECILILGLIL), 39–59 (TPWFYFISLTSLVMSITVLLF), 81–101 (IFRFLILLCSTLCIPLSVEYI), 106–126 (MAITEFLLFLLTAALGGMVLC), 131–151 (LVTIFVALECFSLCSYLLSGY), 166–186 (LLMGGASSSILVYGFSWLYGL), 211–231 (ILIALISIAVGIGFKLSLVPF), 277–297 (WHLLLEILAILSMILGNLIAI), 305–325 (MLAYSSMGQIGYIIIGIIAGD), 336–356 (YMLFYIFMNLGTFACIVLFGL), 377–397 (AFSLALCLLSLGGIPPLAGFF), 413–433 (LLVSIGPLMSVISIYYYLKII), and 468–488 (MIVCVTASTTLGIVMNPIIAI).

This sequence belongs to the complex I subunit 2 family. In terms of assembly, NDH is composed of at least 16 different subunits, 5 of which are encoded in the nucleus.

Its subcellular location is the plastid. The protein localises to the chloroplast thylakoid membrane. It catalyses the reaction a plastoquinone + NADH + (n+1) H(+)(in) = a plastoquinol + NAD(+) + n H(+)(out). The enzyme catalyses a plastoquinone + NADPH + (n+1) H(+)(in) = a plastoquinol + NADP(+) + n H(+)(out). In terms of biological role, NDH shuttles electrons from NAD(P)H:plastoquinone, via FMN and iron-sulfur (Fe-S) centers, to quinones in the photosynthetic chain and possibly in a chloroplast respiratory chain. The immediate electron acceptor for the enzyme in this species is believed to be plastoquinone. Couples the redox reaction to proton translocation, and thus conserves the redox energy in a proton gradient. The sequence is that of NAD(P)H-quinone oxidoreductase subunit 2 B, chloroplastic from Cycas taitungensis (Prince sago).